The following is a 708-amino-acid chain: Leukotoxin translocation ATP-binding protein LktB (708 aa).

One can recognise a Peptidase C39 domain in the interval 1–126 (MEANHQRNDL…ACYQGQLILV (126 aa)). The region spanning 155 to 437 (FLETLIVSIF…LAQLWQDFQQ (283 aa)) is the ABC transmembrane type-1 domain. Transmembrane regions (helical) follow at residues 159–179 (LIVSIFLQIFALITPLFFQVV), 192–212 (LNIITVALAIVIIFEIVLSGL), 270–290 (ALTSVLDLLFSFIFFAVMWYY), 296–316 (LVILGSLPCYILWSIFISPIL), and 389–409 (VMVINLWLGAHLVISGDLSIG). In terms of domain architecture, ABC transporter spans 469–704 (ISFKNIRFRY…SNGLYSYLHQ (236 aa)). 503 to 510 (GRSGSGKS) provides a ligand contact to ATP.

This sequence belongs to the ABC transporter superfamily. Protein-1 exporter (TC 3.A.1.109) family. In terms of assembly, homodimer.

The protein resides in the cell inner membrane. The enzyme catalyses ATP + H2O + proteinSide 1 = ADP + phosphate + proteinSide 2.. Functionally, part of the ABC transporter complex LktBD involved in leukotoxin export. Transmembrane domains (TMD) form a pore in the inner membrane and the ATP-binding domain (NBD) is responsible for energy generation. The sequence is that of Leukotoxin translocation ATP-binding protein LktB (lktB) from Mannheimia haemolytica (Pasteurella haemolytica).